The sequence spans 444 residues: Cholecystokinin receptor type A (444 aa).

Topologically, residues Met1–Ser56 are extracellular. Residues Asn25 and Asn39 are each glycosylated (N-linked (GlcNAc...) asparagine). Residues Cys33 and Cys44 are joined by a disulfide bond. Residues Ala57–Ile82 traverse the membrane as a helical segment. The Cytoplasmic segment spans residues Arg83–Asn92. A helical membrane pass occupies residues Ile93–Leu119. At Lys120–Lys130 the chain is on the extracellular side. Cysteines 129 and 211 form a disulfide. Residues Thr131 to Leu152 traverse the membrane as a helical segment. Topologically, residues Glu153 to His172 are cytoplasmic. The helical transmembrane segment at Ala173 to Ile193 threads the bilayer. Topologically, residues Tyr194–Gln225 are extracellular. Asn205 carries an N-linked (GlcNAc...) asparagine glycan. Residues Thr226–Leu249 traverse the membrane as a helical segment. Over Glu250–Arg329 the chain is Cytoplasmic. A disordered region spans residues Lys263–Lys288. A helical transmembrane segment spans residues Met330–Ala350. At Trp351–Gly365 the chain is on the extracellular side. A helical membrane pass occupies residues Thr366–Met389. Residues Asn390–Pro444 lie on the Cytoplasmic side of the membrane. Residue Cys403 is the site of S-palmitoyl cysteine attachment.

It belongs to the G-protein coupled receptor 1 family. In terms of tissue distribution, pancreas and brain. Also expressed in the gastrointestinal system and vagus nerve.

Its subcellular location is the cell membrane. Receptor for cholecystokinin. Mediates pancreatic growth and enzyme secretion, smooth muscle contraction of the gall bladder and stomach. Has a 1000-fold higher affinity for CCK rather than for gastrin. It modulates feeding and dopamine-induced behavior in the central and peripheral nervous system. This receptor mediates its action by association with G proteins that activate a phosphatidylinositol-calcium second messenger system. This chain is Cholecystokinin receptor type A (Cckar), found in Rattus norvegicus (Rat).